A 607-amino-acid polypeptide reads, in one-letter code: Dolichyl-diphosphooligosaccharide--protein glycosyltransferase subunit 1 (607 aa).

Residues 1 to 23 (MEAPAARLFLLLLLGTWAPAPGS) form the signal peptide. Over 24–434 (ASSEAPPLIN…VVHYTFNKVL (411 aa)) the chain is Lumenal. K187 carries the post-translational modification N6-acetyllysine. The N-linked (GlcNAc...) asparagine glycan is linked to N299. The chain crosses the membrane as a helical span at residues 435-455 (MLQEPLLVVAAFYILFFTVII). The Cytoplasmic segment spans residues 456 to 607 (YVRLDFSITK…TKIDHILDAL (152 aa)). An N6-acetyllysine; alternate modification is found at K538. K538 participates in a covalent cross-link: Glycyl lysine isopeptide (Lys-Gly) (interchain with G-Cter in SUMO2); alternate.

This sequence belongs to the OST1 family. In terms of assembly, component of the oligosaccharyltransferase (OST) complex. OST exists in two different complex forms which contain common core subunits RPN1, RPN2, OST48, OST4, DAD1 and TMEM258, either STT3A or STT3B as catalytic subunits, and form-specific accessory subunits. STT3A complex assembly occurs through the formation of 3 subcomplexes. Subcomplex 1 contains RPN1 and TMEM258, subcomplex 2 contains the STT3A-specific subunits STT3A, DC2/OSTC, and KCP2 as well as the core subunit OST4, and subcomplex 3 contains RPN2, DAD1, and OST48. The STT3A complex can form stable complexes with the Sec61 complex or with both the Sec61 and TRAP complexes. Interacts with TMEM35A/NACHO. In terms of processing, ubiquitinated by the ECS(ASB11) complex. Ufmylated by UFL1 in response to endoplasmic reticulum stress, promoting reticulophagy of endoplasmic reticulum sheets.

It is found in the endoplasmic reticulum membrane. It participates in protein modification; protein glycosylation. Its function is as follows. Subunit of the oligosaccharyl transferase (OST) complex that catalyzes the initial transfer of a defined glycan (Glc(3)Man(9)GlcNAc(2) in eukaryotes) from the lipid carrier dolichol-pyrophosphate to an asparagine residue within an Asn-X-Ser/Thr consensus motif in nascent polypeptide chains, the first step in protein N-glycosylation. N-glycosylation occurs cotranslationally and the complex associates with the Sec61 complex at the channel-forming translocon complex that mediates protein translocation across the endoplasmic reticulum (ER). All subunits are required for a maximal enzyme activity. This is Dolichyl-diphosphooligosaccharide--protein glycosyltransferase subunit 1 from Pongo abelii (Sumatran orangutan).